Here is a 294-residue protein sequence, read N- to C-terminus: Ribosomal protein L11 methyltransferase (294 aa).

S-adenosyl-L-methionine is bound by residues threonine 144, glycine 165, aspartate 187, and asparagine 229.

Belongs to the methyltransferase superfamily. PrmA family.

Its subcellular location is the cytoplasm. The catalysed reaction is L-lysyl-[protein] + 3 S-adenosyl-L-methionine = N(6),N(6),N(6)-trimethyl-L-lysyl-[protein] + 3 S-adenosyl-L-homocysteine + 3 H(+). In terms of biological role, methylates ribosomal protein L11. This Pseudomonas aeruginosa (strain LESB58) protein is Ribosomal protein L11 methyltransferase.